The chain runs to 276 residues: Dermonecrotic toxin LlSicTox-alphaIV2iii (276 aa).

His5 is an active-site residue. Mg(2+) is bound by residues Glu25 and Asp27. His41 (nucleophile) is an active-site residue. Cystine bridges form between Cys45–Cys51 and Cys47–Cys193. A Mg(2+)-binding site is contributed by Asp85.

This sequence belongs to the arthropod phospholipase D family. Class II subfamily. Mg(2+) is required as a cofactor. In terms of tissue distribution, expressed by the venom gland.

Its subcellular location is the secreted. The enzyme catalyses an N-(acyl)-sphingosylphosphocholine = an N-(acyl)-sphingosyl-1,3-cyclic phosphate + choline. The catalysed reaction is an N-(acyl)-sphingosylphosphoethanolamine = an N-(acyl)-sphingosyl-1,3-cyclic phosphate + ethanolamine. It catalyses the reaction a 1-acyl-sn-glycero-3-phosphocholine = a 1-acyl-sn-glycero-2,3-cyclic phosphate + choline. It carries out the reaction a 1-acyl-sn-glycero-3-phosphoethanolamine = a 1-acyl-sn-glycero-2,3-cyclic phosphate + ethanolamine. Dermonecrotic toxins cleave the phosphodiester linkage between the phosphate and headgroup of certain phospholipids (sphingolipid and lysolipid substrates), forming an alcohol (often choline) and a cyclic phosphate. This toxin acts on sphingomyelin (SM). It may also act on ceramide phosphoethanolamine (CPE), lysophosphatidylcholine (LPC) and lysophosphatidylethanolamine (LPE), but not on lysophosphatidylserine (LPS), and lysophosphatidylglycerol (LPG). It acts by transphosphatidylation, releasing exclusively cyclic phosphate products as second products. Induces dermonecrosis, hemolysis, increased vascular permeability, edema, inflammatory response, and platelet aggregation. The sequence is that of Dermonecrotic toxin LlSicTox-alphaIV2iii from Loxosceles laeta (South American recluse spider).